The following is a 241-amino-acid chain: Pyridoxine 5'-phosphate synthase (241 aa).

Residue Asn-10 coordinates 3-amino-2-oxopropyl phosphate. Position 12–13 (12–13 (DH)) interacts with 1-deoxy-D-xylulose 5-phosphate. Arg-21 is a 3-amino-2-oxopropyl phosphate binding site. His-48 serves as the catalytic Proton acceptor. 1-deoxy-D-xylulose 5-phosphate contacts are provided by Arg-50 and His-55. Glu-75 functions as the Proton acceptor in the catalytic mechanism. Thr-105 contributes to the 1-deoxy-D-xylulose 5-phosphate binding site. His-195 serves as the catalytic Proton donor. Residues Gly-196 and 217–218 (GH) each bind 3-amino-2-oxopropyl phosphate.

It belongs to the PNP synthase family. Homooctamer; tetramer of dimers.

The protein localises to the cytoplasm. The enzyme catalyses 3-amino-2-oxopropyl phosphate + 1-deoxy-D-xylulose 5-phosphate = pyridoxine 5'-phosphate + phosphate + 2 H2O + H(+). The protein operates within cofactor biosynthesis; pyridoxine 5'-phosphate biosynthesis; pyridoxine 5'-phosphate from D-erythrose 4-phosphate: step 5/5. Its function is as follows. Catalyzes the complicated ring closure reaction between the two acyclic compounds 1-deoxy-D-xylulose-5-phosphate (DXP) and 3-amino-2-oxopropyl phosphate (1-amino-acetone-3-phosphate or AAP) to form pyridoxine 5'-phosphate (PNP) and inorganic phosphate. This chain is Pyridoxine 5'-phosphate synthase, found in Bdellovibrio bacteriovorus (strain ATCC 15356 / DSM 50701 / NCIMB 9529 / HD100).